Here is a 99-residue protein sequence, read N- to C-terminus: Cytochrome c2 iso-1 (99 aa).

Cys10, Cys13, His14, and Met75 together coordinate heme c.

It belongs to the cytochrome c family. Post-translationally, binds 1 heme c group covalently per subunit.

Functionally, cytochrome c2 is found mainly in purple, non-sulfur, photosynthetic bacteria where it functions as the electron donor to the oxidized bacteriochlorophyll in the photophosphorylation pathway. However, it may also have a role in the respiratory chain and is found in some non-photosynthetic bacteria. The protein is Cytochrome c2 iso-1 of Magnetospirillum fulvum (Rhodospirillum fulvum).